The primary structure comprises 238 residues: Ephrin-A3 (238 aa).

The first 22 residues, 1-22 (MAAAPLLLLLLLVPVPLLPLLA), serve as a signal peptide directing secretion. The Ephrin RBD domain maps to 30 to 169 (GNRHAVYWNS…RMKVFVCCAS (140 aa)). 3 N-linked (GlcNAc...) asparagine glycosylation sites follow: asparagine 38, asparagine 67, and asparagine 100. 2 cysteine pairs are disulfide-bonded: cysteine 63–cysteine 110 and cysteine 99–cysteine 158. Glycine 214 carries GPI-anchor amidated glycine lipidation. Positions 215-238 (TSPKREHLPLAVGIAFFLMTFLAS) are cleaved as a propeptide — removed in mature form.

It belongs to the ephrin family. Interacts with EPHA8; activates EPHA8. As to expression, expressed in brain, skeletal muscle, spleen, thymus, prostate, testis, ovary, small intestine, and peripheral blood leukocytes.

The protein resides in the cell membrane. In terms of biological role, cell surface GPI-bound ligand for Eph receptors, a family of receptor tyrosine kinases which are crucial for migration, repulsion and adhesion during neuronal, vascular and epithelial development. Binds promiscuously Eph receptors residing on adjacent cells, leading to contact-dependent bidirectional signaling into neighboring cells. The signaling pathway downstream of the receptor is referred to as forward signaling while the signaling pathway downstream of the ephrin ligand is referred to as reverse signaling. The chain is Ephrin-A3 (EFNA3) from Homo sapiens (Human).